A 396-amino-acid chain; its full sequence is 1-deoxy-D-xylulose 5-phosphate reductoisomerase (396 aa).

NADPH contacts are provided by threonine 13, glycine 14, serine 15, isoleucine 16, and asparagine 127. Residue lysine 128 participates in 1-deoxy-D-xylulose 5-phosphate binding. An NADPH-binding site is contributed by glutamate 129. Position 153 (aspartate 153) interacts with Mn(2+). The 1-deoxy-D-xylulose 5-phosphate site is built by serine 154, glutamate 155, serine 184, and histidine 207. Mn(2+) is bound at residue glutamate 155. NADPH is bound at residue glycine 213. 1-deoxy-D-xylulose 5-phosphate contacts are provided by serine 220, asparagine 225, lysine 226, and glutamate 229. Mn(2+) is bound at residue glutamate 229.

The protein belongs to the DXR family. It depends on Mg(2+) as a cofactor. Requires Mn(2+) as cofactor.

It catalyses the reaction 2-C-methyl-D-erythritol 4-phosphate + NADP(+) = 1-deoxy-D-xylulose 5-phosphate + NADPH + H(+). The protein operates within isoprenoid biosynthesis; isopentenyl diphosphate biosynthesis via DXP pathway; isopentenyl diphosphate from 1-deoxy-D-xylulose 5-phosphate: step 1/6. In terms of biological role, catalyzes the NADPH-dependent rearrangement and reduction of 1-deoxy-D-xylulose-5-phosphate (DXP) to 2-C-methyl-D-erythritol 4-phosphate (MEP). This is 1-deoxy-D-xylulose 5-phosphate reductoisomerase from Pseudomonas paraeruginosa (strain DSM 24068 / PA7) (Pseudomonas aeruginosa (strain PA7)).